We begin with the raw amino-acid sequence, 318 residues long: Oncosphere antigen A (318 aa).

Fibronectin type-III domains are found at residues 6–103, 109–207, and 211–308; these read IPQN…TPLP, KPSF…ISRA, and VPQN…TPSV.

In Hydatigena taeniaeformis (Feline tapeworm), this protein is Oncosphere antigen A (ONCA).